The sequence spans 198 residues: V-type ATP synthase subunit E (198 aa).

Belongs to the V-ATPase E subunit family.

Produces ATP from ADP in the presence of a proton gradient across the membrane. In Acetivibrio thermocellus (strain ATCC 27405 / DSM 1237 / JCM 9322 / NBRC 103400 / NCIMB 10682 / NRRL B-4536 / VPI 7372) (Clostridium thermocellum), this protein is V-type ATP synthase subunit E.